Here is a 515-residue protein sequence, read N- to C-terminus: SWI/SNF-related matrix-associated actin-dependent regulator of chromatin subfamily D member 1 (515 aa).

The tract at residues 1–128 (MAARAGFQSV…RNHNAKKKKM (128 aa)) is disordered. Over residues 14 to 23 (GGAGASGGAG) the composition is skewed to gly residues. Positions 43 to 167 (APGQGLYRSP…DQTIMRKRLD (125 aa)) are interaction with ESR1, NR1H4, NR3C1, PGR and SMARCA4. Arginine 68 and arginine 88 each carry asymmetric dimethylarginine. Lysine 101 participates in a covalent cross-link: Glycyl lysine isopeptide (Lys-Gly) (interchain with G-Cter in SUMO2). The span at 104–117 (APQQIQQVQQQAVQ) shows a compositional bias: low complexity. The tract at residues 168–474 (IQEALKRPIK…TMTDVVGNPE (307 aa)) is interaction with SMARCC1 and SMARCC2. The tract at residues 180 to 515 (RKLRIFISNT…LEQALGIRNT (336 aa)) is necessary for GR/NR3C1-mediated remodeling and transcription from chromatin; required for GR/NR3C1 interaction with the BRG1/SMARCA4 complex in vivo. Threonine 203 bears the Phosphothreonine mark. N6-acetyllysine is present on lysine 223. The region spanning 290–367 (YQPPQFKLDP…PQRLHALLMP (78 aa)) is the SWIB/MDM2 domain. Residues 412-440 (ASQQEIATLDNKIHETIETINQLKTQREF) adopt a coiled-coil conformation.

It belongs to the SMARCD family. Component of the multiprotein chromatin-remodeling complexes SWI/SNF: SWI/SNF-A (BAF), SWI/SNF-B (PBAF) and related complexes. The canonical complex contains a catalytic subunit (either SMARCA4/BRG1/BAF190A or SMARCA2/BRM/BAF190B), and at least SMARCE1, ACTL6A/BAF53, SMARCC1/BAF155, SMARCC2/BAF170, and SMARCB1/SNF5/BAF47. Other subunits specific to each of the complexes may also be present permitting several possible combinations developmentally and tissue specific. Component of the BAF complex, which includes at least actin (ACTB), ARID1A/BAF250A, ARID1B/BAF250B, SMARCA2/BRM, SMARCA4/BRG1/BAF190A, ACTL6A/BAF53, ACTL6B/BAF53B, SMARCE1/BAF57, SMARCC1/BAF155, SMARCC2/BAF170, SMARCB1/SNF5/INI1, and one or more SMARCD1/BAF60A, SMARCD2/BAF60B, or SMARCD3/BAF60C. In muscle cells, the BAF complex also contains DPF3. Component of neural progenitors-specific chromatin remodeling complex (npBAF complex) composed of at least, ARID1A/BAF250A or ARID1B/BAF250B, SMARCD1/BAF60A, SMARCD3/BAF60C, SMARCA2/BRM/BAF190B, SMARCA4/BRG1/BAF190A, SMARCB1/BAF47, SMARCC1/BAF155, SMARCE1/BAF57, SMARCC2/BAF170, PHF10/BAF45A, ACTL6A/BAF53A and actin. Component of neuron-specific chromatin remodeling complex (nBAF complex) composed of at least, ARID1A/BAF250A or ARID1B/BAF250B, SMARCD1/BAF60A, SMARCD3/BAF60C, SMARCA2/BRM/BAF190B, SMARCA4/BRG1/BAF190A, SMARCB1/BAF47, SMARCC1/BAF155, SMARCE1/BAF57, SMARCC2/BAF170, DPF1/BAF45B, DPF3/BAF45C, ACTL6B/BAF53B and actin. Component of the SWI/SNF-B (PBAF) chromatin remodeling complex, at least composed of SMARCA4/BRG1, SMARCB1/BAF47/SNF5, ACTL6A/BAF53A or ACTL6B/BAF53B, SMARCE1/BAF57, SMARCD1/BAF60A, SMARCD2/BAF60B, perhaps SMARCD3/BAF60C, SMARCC1/BAF155, SMARCC2/BAF170, PBRM1/BAF180, ARID2/BAF200 and actin (ACTB). Component of SWI/SNF (GBAF) subcomplex, which includes at least BICRA or BICRAL (mutually exclusive), BRD9, SS18, SMARCA2/BRM, SMARCA4/BRG1/BAF190A, ACTL6A/BAF53, SMARCC1/BAF155, and SMARCD1/BAF60A. Specifically interacts with the VDR heterodimer complex. Interacts with ESR1, NR3C1, NR1H4, PGR, SMARCA4, SMARCC1 and SMARCC2. Interacts with DPF2. Interacts with DPF3a (isoform 2 of DPF3/BAF45C) and with HDGFL2 in a DPF3a-dependent manner. Interacts with FOS, FOSB isoform 1 and 2, FOSL1 and FOSL2. Interacts with AKIRIN2. As to expression, ubiquitous.

It localises to the nucleus. Its function is as follows. Involved in transcriptional activation and repression of select genes by chromatin remodeling (alteration of DNA-nucleosome topology). Component of SWI/SNF chromatin remodeling complexes that carry out key enzymatic activities, changing chromatin structure by altering DNA-histone contacts within a nucleosome in an ATP-dependent manner. Belongs to the neural progenitors-specific chromatin remodeling complex (npBAF complex) and the neuron-specific chromatin remodeling complex (nBAF complex). During neural development a switch from a stem/progenitor to a postmitotic chromatin remodeling mechanism occurs as neurons exit the cell cycle and become committed to their adult state. The transition from proliferating neural stem/progenitor cells to postmitotic neurons requires a switch in subunit composition of the npBAF and nBAF complexes. As neural progenitors exit mitosis and differentiate into neurons, npBAF complexes which contain ACTL6A/BAF53A and PHF10/BAF45A, are exchanged for homologous alternative ACTL6B/BAF53B and DPF1/BAF45B or DPF3/BAF45C subunits in neuron-specific complexes (nBAF). The npBAF complex is essential for the self-renewal/proliferative capacity of the multipotent neural stem cells. The nBAF complex along with CREST plays a role regulating the activity of genes essential for dendrite growth. Has a strong influence on vitamin D-mediated transcriptional activity from an enhancer vitamin D receptor element (VDRE). May be a link between mammalian SWI-SNF-like chromatin remodeling complexes and the vitamin D receptor (VDR) heterodimer. Mediates critical interactions between nuclear receptors and the BRG1/SMARCA4 chromatin-remodeling complex for transactivation. The protein is SWI/SNF-related matrix-associated actin-dependent regulator of chromatin subfamily D member 1 (Smarcd1) of Mus musculus (Mouse).